The following is a 504-amino-acid chain: MSSKGIQKKTKAVDATKKLAEKIKKQALKQKALASASSAASTKESLPVSETISISTSETPVSDVSELSNKEDLSTKKDQSSASSSSSTSSSSSPPSVQSFTEFDLVPELLESIQSLKYTQPTPIQAAAIPHALQGKDIVGIAETGSGKTAAFAIPILQTLYTAAQPYYALVLAPTRELAFQIKETFDALGSSMGLRSVCIIGGMSMMEQARDLMRKPHVIIATPGRLIDHLEHTKGFSLKKLQYLVMDEVDRMIDLDYAKAIDQILKQIPSHQRITYLYTATMSREIEKFKRSLNSPVQVEIVKLEKVPDKLKQTMCLTSPNTKDTRLIQIVNLDSMKRVIIFTRTVVHTRRCCLMLLNLGFKCVELHGQMPQSRRLGAINKFKAGTPILVATDVAARGLDIPAVDLVINYDIPDPTLYIHRVGRTARAGKAGKAISLVTQYDLESYLRIENTLGTKLPKEDLPLDEMQGLQVSVDRALSKAIQMLRNEENDNKLRHRGRSNNK.

The segment covering alanine 34–serine 62 has biased composition (low complexity). Residues alanine 34–serine 99 form a disordered region. Basic and acidic residues predominate over residues serine 68–glutamine 79. Positions serine 80–serine 99 are enriched in low complexity. Residues glutamine 98–alanine 126 carry the Q motif motif. In terms of domain architecture, Helicase ATP-binding spans isoleucine 129 to glutamate 301. Residue alanine 142–threonine 149 coordinates ATP. Positions aspartate 248–aspartate 251 match the DEAD box motif. The region spanning arginine 327–leucine 471 is the Helicase C-terminal domain.

This sequence belongs to the DEAD box helicase family. DDX47/RRP3 subfamily. In terms of assembly, interacts with the SSU processome.

It localises to the nucleus. The enzyme catalyses ATP + H2O = ADP + phosphate + H(+). Its function is as follows. ATP-dependent rRNA helicase required for pre-ribosomal RNA processing. Involved in the maturation of the 35S-pre-rRNA and to its cleavage to mature 18S rRNA. The protein is ATP-dependent rRNA helicase RRP3 of Lodderomyces elongisporus (strain ATCC 11503 / CBS 2605 / JCM 1781 / NBRC 1676 / NRRL YB-4239) (Yeast).